Consider the following 360-residue polypeptide: Peptide chain release factor 1 (360 aa).

Q237 bears the N5-methylglutamine mark.

This sequence belongs to the prokaryotic/mitochondrial release factor family. Post-translationally, methylated by PrmC. Methylation increases the termination efficiency of RF1.

The protein localises to the cytoplasm. In terms of biological role, peptide chain release factor 1 directs the termination of translation in response to the peptide chain termination codons UAG and UAA. This Pseudomonas fluorescens (strain SBW25) protein is Peptide chain release factor 1.